The sequence spans 362 residues: Caveolae-associated protein 4 (362 aa).

The tract at residues methionine 1–aspartate 24 is disordered. The stretch at isoleucine 100–lysine 120 forms a coiled coil. Phosphoserine occurs at positions 152, 171, and 172. 3 stretches are compositionally biased toward basic and acidic residues: residues arginine 230–lysine 255, lysine 275–glycine 289, and histidine 305–threonine 320. Disordered stretches follow at residues arginine 230–glycine 289 and histidine 305–valine 346. The residue at position 324 (tyrosine 324) is a Phosphotyrosine. Phosphothreonine is present on threonine 334. Serine 353 is modified (phosphoserine).

It belongs to the CAVIN family. In terms of assembly, component of the CAVIN complex composed of CAVIN1, CAVIN2, CAVIN3 and CAVIN4. Interacts with CAVIN1. Interacts with CAVIN2; this augments the transactivation of NPPA. Interacts with CAV3, ADRA1A, ADRA1B, MAPK1 and MAPK3. In terms of tissue distribution, abundantly expressed in cardiac and skeletal muscle (at protein level). Weaker expression in aorta and lung. In heart, expressed in cardiomyocytes and vascular smooth muscle cells but not in other surrounding cells including vascular endothelial cells.

It is found in the cytoplasm. It localises to the myofibril. The protein localises to the sarcomere. Its subcellular location is the cytosol. The protein resides in the membrane. It is found in the caveola. It localises to the cell membrane. The protein localises to the sarcolemma. Functionally, modulates the morphology of formed caveolae in cardiomyocytes, but is not required for caveolar formation. Facilitates the recruitment of MAPK1/3 to caveolae within cardiomyocytes and regulates alpha-1 adrenergic receptor-induced hypertrophic responses in cardiomyocytes through MAPK1/3 activation. Contributes to proper membrane localization and stabilization of caveolin-3 (CAV3) in cardiomyocytes. Induces RHOA activation and activates NPPA transcription and myofibrillar organization through the Rho/ROCK signaling pathway. This Mus musculus (Mouse) protein is Caveolae-associated protein 4 (Cavin4).